Consider the following 507-residue polypeptide: METQIRADEISRVLKEQINQYNKKIEVSETGSVLSVGDGVARIYGLENAMAGELVEFPGEVFGMVLNLEEGYVGAVLFGEDRHIKEGDVVKRTKKIVSVPVGEALLGRVVDALGNPIDGRGAINTPHSRIVETKAPGIVYRHPVEEPLQTGIKAIDALVPIGRGQRELIIGDRQTGKTTIAVDTIINQKGLNVQCFYVAIGQKQSTVALVVEKLRAAGALEYTTVIAANASDPAPLQYLAAYSGTAMAEYFRDTGRHALIVYDDLTKQAQAYRQLSLLLRRPPGREAYPGDVFYCHSRLLERASKLSADKGGGSLTALPIIETQAGDISAYIPTNVISITDGQIFLESDLFYKGVRPAISVGKSVSRVGGAAQIKAMKQVAGSLKLELAQFRSMEAFAAFASDLDKASQQQLARGRRLIEVLKQPQYSPVKVEEQIIMIFAAGNAFVDQYPETDVKRYEKEMIEFLKNKHSDIIKTISEKKAIADDTKKALLAALEEFKAIFQPSNK.

171 to 178 (GDRQTGKT) serves as a coordination point for ATP.

It belongs to the ATPase alpha/beta chains family. As to quaternary structure, F-type ATPases have 2 components, CF(1) - the catalytic core - and CF(0) - the membrane proton channel. CF(1) has five subunits: alpha(3), beta(3), gamma(1), delta(1), epsilon(1). CF(0) has three main subunits: a(1), b(2) and c(9-12). The alpha and beta chains form an alternating ring which encloses part of the gamma chain. CF(1) is attached to CF(0) by a central stalk formed by the gamma and epsilon chains, while a peripheral stalk is formed by the delta and b chains.

The protein resides in the cell inner membrane. The catalysed reaction is ATP + H2O + 4 H(+)(in) = ADP + phosphate + 5 H(+)(out). Functionally, produces ATP from ADP in the presence of a proton gradient across the membrane. The alpha chain is a regulatory subunit. This chain is ATP synthase subunit alpha, found in Bdellovibrio bacteriovorus (strain ATCC 15356 / DSM 50701 / NCIMB 9529 / HD100).